Reading from the N-terminus, the 422-residue chain is Glutamyl-tRNA reductase (422 aa).

Substrate is bound by residues 49–52 (TCNR), serine 107, 112–114 (EPQ), and glutamine 118. Cysteine 50 (nucleophile) is an active-site residue. 187 to 192 (GAGETI) contacts NADP(+).

Belongs to the glutamyl-tRNA reductase family. Homodimer.

It carries out the reaction (S)-4-amino-5-oxopentanoate + tRNA(Glu) + NADP(+) = L-glutamyl-tRNA(Glu) + NADPH + H(+). Its pathway is porphyrin-containing compound metabolism; protoporphyrin-IX biosynthesis; 5-aminolevulinate from L-glutamyl-tRNA(Glu): step 1/2. Its function is as follows. Catalyzes the NADPH-dependent reduction of glutamyl-tRNA(Glu) to glutamate 1-semialdehyde (GSA). This is Glutamyl-tRNA reductase from Pseudomonas paraeruginosa (strain DSM 24068 / PA7) (Pseudomonas aeruginosa (strain PA7)).